Consider the following 1600-residue polypeptide: MPCARGSWLAKLSIVAQLINFGAFCHGRQTQPWPVRFPDPRQEHFIKSLPEYHIVSPVQVDAGGHVLSYGLHHPVTSSRKKRAAGGSGDQLYYRISHEEKDLFFNLTVNWEFLSNGYVVEKRYGNLSHVKMVASSGQPCHLRGTVLQQGTTVGIGTAALSACQGLTGFFHLPHGDFFIEPVKKHPLTEEGSYPHVVYRRQSIRAPETKEPICGLKDSLDNSVKQELQREKWERKTLRSRSLSRRSISKERWVETLVVADTKTVEYHGSENVESYILTIMNMVTGLFHSPSIGNLVHIVVVRLILLEEEEQGLKIVHHAEKTLSSFCKWQKSINPKSDLNPVHHDVAVLITRKDICAGVNRPCETLGLSQLSGMCQPHRSCNINEDSGLPLAFTIAHELGHSFGIQHDGKENDCEPVGRHPYIMSQQIQYDPTPLTWSKCSKEYITRFLDRGRGFCLDDIPSKKGLKSNVIAPGVIYDVHHQCQLQYGPNATFCQEVENVCQTLWCSVKGFCRSKLDAAADGTRCGEKKWCMAGKCITVGKKPESIPGGWGRWSPWSHCSRTCGAGAQSAERLCNNPEPKFGGKYCTGERKRYRLCNVHPCRSDTPTFRQMQCSEFDTVPYKNQFYRWFPVFNAAHPCELYCRPIDEQFSERMLEAVIDGTPCFEGGNSRNVCINGICKRVGCDYEIDSNATEDRCGVCLGDGSACQTVKKLFRQKEGSGYVDIGLIPKGARDIRVMEIKAAGNFLAIRSEDPEKYYLNGGFIIQWNGNYKLAGTVFQYDRKGDLEKLIAPGPTNESVWLQLLFQVTNPGIKYEYTVRKDGLDNDVEKLLYFWQFGRWTECSVTCGTGIRRQAAHCVKKGHGIVKTTFCNPETQPSVRQKKCHEKDCPPRWWAGEWEACSTTCGPYGEKKRTVLCIQTMGSDEQALPATDCQHLLKPKALVSCNRDILCPSDWTVGNWSECSVSCGGGVRIRSVTCAKNLNEPCDKTRKPNSRALCGLQQCPFSRRVLKPNKDIAPSGKNQSTAEHDPFKPIPAPTSRPTPLSTPTVPESMSTSTPTINSLGSTIASQEDANGMGWQNNSTQAEEGSHFPTSSGSTSQVPVTSWSLSIQPDDENVSSSAIGPTSEGDFWATTTSDSGLSSSDAMTWQVTPFYSTMTTDPEVEIHSGSGEDSDQPLNKDKSNSVIWNKIGVPEHDAPMETDAELPLGPPPTSYMGEEPSWPPFSTKMEGSLPAWSFKNETPRDDGMIAEKSRKIPLPLAGDHHPATSEKLENHDKLALPNTTNPTQGFGPVLTEEDASNLIAEGFLLNASDYKHLMKDHSPAYWIVGNWSKCSTTCGLGAYWRSVECSSGVDADCTTIQRPDPAKKCHLRPCAGWRVGNWSKCSRNCSGGFKIREVQCMDSLDHHRSLRPFHCQFLAGAPPPLSMSCNLEPCGEWQVEPWSQCSRSCGGGVQERGVSCPGGLCDWTKRPATTVPCNRHLCCHWATGNWELCNTSCGGGSQKRTIHCIPSENSTTEDQDQCLCDHQVKPPEFQTCNQQACRKSADLTCLKDRLSISFCQTLKSMRKCSVPSVRAQCCLSCPQAPSIHTQRQRKQQLLQNHDML.

The first 25 residues, 1–25 (MPCARGSWLAKLSIVAQLINFGAFC), serve as a signal peptide directing secretion. Residues 26–244 (HGRQTQPWPV…TLRSRSLSRR (219 aa)) constitute a propeptide that is removed on maturation. The N-linked (GlcNAc...) asparagine glycan is linked to Asn105. Positions 210–217 (PICGLKDS) match the Cysteine switch motif. Position 212 (Cys212) interacts with Zn(2+). One can recognise a Peptidase M12B domain in the interval 250 to 460 (RWVETLVVAD…GRGFCLDDIP (211 aa)). 11 cysteine pairs are disulfide-bonded: Cys326–Cys380, Cys355–Cys362, Cys374–Cys455, Cys413–Cys439, Cys482–Cys505, Cys493–Cys511, Cys500–Cys530, Cys524–Cys535, Cys558–Cys595, Cys562–Cys600, and Cys573–Cys585. A Zn(2+)-binding site is contributed by His396. Residue Glu397 is part of the active site. Residues His400 and His406 each contribute to the Zn(2+) site. Residues 469 to 548 (VIAPGVIYDV…GKKPESIPGG (80 aa)) enclose the Disintegrin domain. TSP type-1 domains lie at 546–601 (PGGW…HPCR), 827–887 (KLLY…KDCP), 891–947 (WAGE…RDIL), and 948–1001 (CPSD…QQCP). Positions 705–831 (CQTVKKLFRQ…DNDVEKLLYF (127 aa)) are spacer 1. The spacer 2 stretch occupies residues 1001–1321 (PFSRRVLKPN…HLMKDHSPAY (321 aa)). 2 disordered regions span residues 1006-1140 (VLKP…LSSS) and 1158-1179 (PEVE…KDKS). The span at 1038 to 1047 (PTPLSTPTVP) shows a compositional bias: low complexity. Residues 1048 to 1107 (ESMSTSTPTINSLGSTIASQEDANGMGWQNNSTQAEEGSHFPTSSGSTSQVPVTSWSLSI) show a composition bias toward polar residues. The segment covering 1130–1140 (TTTSDSGLSSS) has biased composition (low complexity). TSP type-1 domains follow at residues 1318 to 1371 (SPAY…RPCA), 1373 to 1428 (WRVG…CNLE), 1429 to 1477 (PCGE…NRHL), and 1478 to 1538 (CCHW…QACR). The region spanning 1541–1581 (ADLTCLKDRLSISFCQTLKSMRKCSVPSVRAQCCLSCPQAP) is the PLAC domain.

In terms of assembly, interacts with COMP. Zn(2+) is required as a cofactor. Post-translationally, the precursor is cleaved by a furin endopeptidase. Subjected to an intracellular maturation process yielding a 120 kDa N-terminal fragment containing the metalloproteinase, disintegrin, one TSP type-1 and the Cys-rich domains and a 83 kDa C-terminal fragment containing the spacer 2 and four TSP type-1 domains. In terms of processing, glycosylated. Can be O-fucosylated by POFUT2 on a serine or a threonine residue found within the consensus sequence C1-X(2)-(S/T)-C2-G of the TSP type-1 repeat domains where C1 and C2 are the first and second cysteine residue of the repeat, respectively. Fucosylated repeats can then be further glycosylated by the addition of a beta-1,3-glucose residue by the glucosyltransferase, B3GALTL. Fucosylation mediates the efficient secretion of ADAMTS family members. Can also be C-glycosylated with one or two mannose molecules on tryptophan residues within the consensus sequence W-X-X-W of the TPRs, and N-glycosylated. These other glycosylations can also facilitate secretion.

It localises to the secreted. The protein localises to the extracellular space. It is found in the extracellular matrix. Inhibited by alpha-2 macroglobulin. In terms of biological role, metalloprotease that plays a role in the degradation of COMP. Also cleaves alpha-2 macroglobulin and aggregan. Has anti-tumorigenic properties. In Mus musculus (Mouse), this protein is A disintegrin and metalloproteinase with thrombospondin motifs 12 (Adamts12).